A 230-amino-acid polypeptide reads, in one-letter code: Ribosome-recycling factor, mitochondrial (230 aa).

The transit peptide at 1–24 (MILTTARLNCRPVTVPRLFNRSFS) directs the protein to the mitochondrion.

Belongs to the RRF family.

It localises to the mitochondrion. In terms of biological role, necessary for protein synthesis in mitochondria. Functions as a ribosome recycling factor in mitochondria. The protein is Ribosome-recycling factor, mitochondrial (RRF1) of Saccharomyces cerevisiae (strain ATCC 204508 / S288c) (Baker's yeast).